We begin with the raw amino-acid sequence, 94 residues long: Large ribosomal subunit protein eL42 (94 aa).

Zn(2+)-binding residues include cysteine 11, cysteine 14, cysteine 71, and cysteine 74. Residues 11 to 74 (CPFCKRHTIH…LDLRFRCTVC (64 aa)) form a C4-type zinc finger.

Belongs to the eukaryotic ribosomal protein eL42 family. Part of the 50S ribosomal subunit. Requires Zn(2+) as cofactor.

Binds to the 23S rRNA. This Thermococcus kodakarensis (strain ATCC BAA-918 / JCM 12380 / KOD1) (Pyrococcus kodakaraensis (strain KOD1)) protein is Large ribosomal subunit protein eL42.